The chain runs to 144 residues: Eukaryotic translation initiation factor 1A, Y-chromosomal (144 aa).

Basic residues predominate over residues 1–15 (MPKNKGKGGKNRRRG). The disordered stretch occupies residues 1–26 (MPKNKGKGGKNRRRGKNENESEKREL). Positions 16–26 (KNENESEKREL) are enriched in basic and acidic residues. The S1-like domain occupies 22–96 (EKRELVFKED…NKADVILKYN (75 aa)). Lys-88 is covalently cross-linked (Glycyl lysine isopeptide (Lys-Gly) (interchain with G-Cter in ubiquitin)). Positions 114 to 144 (KINETDTFGPGDDDEIQFDDIGDDDEDIDDI) are disordered. The segment covering 124–144 (GDDDEIQFDDIGDDDEDIDDI) has biased composition (acidic residues).

Belongs to the eIF-1A family. In terms of assembly, component of the 43S pre-initiation complex (43S PIC), which is composed of the 40S ribosomal subunit, EIF1, eIF1A (EIF1AX), eIF3 complex, EIF5 and eIF2-GTP-initiator tRNA complex (eIF2 ternary complex). Interacts with EIF5; this interaction contributes to the maintenance of EIF1 within the open 43S PIC. Interacts through its C-terminal domain (CTD) with the CTD of EIF5B; from the location of the start codon by the 43S complex until the formation of the 80S complex. In terms of tissue distribution, ubiquitous.

The protein resides in the cytoplasm. Component of the 43S pre-initiation complex (43S PIC), which binds to the mRNA cap-proximal region, scans mRNA 5'-untranslated region, and locates the initiation codon. This protein enhances formation of the cap-proximal complex. Together with EIF1, facilitates scanning, start codon recognition, promotion of the assembly of 48S complex at the initiation codon (43S PIC becomes 48S PIC after the start codon is reached), and dissociation of aberrant complexes. After start codon location, together with EIF5B orients the initiator methionine-tRNA in a conformation that allows 60S ribosomal subunit joining to form the 80S initiation complex. Is released after 80S initiation complex formation, just after GTP hydrolysis by EIF5B, and before release of EIF5B. Its globular part is located in the A site of the 40S ribosomal subunit. Its interaction with EIF5 during scanning contribute to the maintenance of EIF1 within the open 43S PIC. In contrast to yeast orthologs, does not bind EIF1. In Homo sapiens (Human), this protein is Eukaryotic translation initiation factor 1A, Y-chromosomal (EIF1AY).